Here is a 259-residue protein sequence, read N- to C-terminus: Phosphate import ATP-binding protein PstB 1 (259 aa).

The region spanning 13 to 254 is the ABC transporter domain; that stretch reads IQVRGLEFFY…PSKTQTEDYI (242 aa). 45–52 provides a ligand contact to ATP; it reads GPSGCGKS.

This sequence belongs to the ABC transporter superfamily. Phosphate importer (TC 3.A.1.7) family. As to quaternary structure, the complex is composed of two ATP-binding proteins (PstB), two transmembrane proteins (PstC and PstA) and a solute-binding protein (PstS).

Its subcellular location is the cell inner membrane. It carries out the reaction phosphate(out) + ATP + H2O = ADP + 2 phosphate(in) + H(+). Functionally, part of the ABC transporter complex PstSACB involved in phosphate import. Responsible for energy coupling to the transport system. The polypeptide is Phosphate import ATP-binding protein PstB 1 (Pseudomonas syringae pv. tomato (strain ATCC BAA-871 / DC3000)).